A 394-amino-acid polypeptide reads, in one-letter code: MHHPVILLLCLSSLAGAANLPPEDLSQPVTADVIVPTGGTAILKCTVQEHLESSLQWSNTAQQTLYFGEKRALRDNRIQLVHSSPNELTISISNVVLSDEGEYTCSIFTMPVRTAKAVVTVLGVPQKPQVSGFESAFKENDKAKLRCTTSGSKPAANIKWYKGPEELEGAKTSVLEDGNGKTFTVKSFIEFDVTKDDDGAEITCAVGHESLHDSAKSSSHKIQVQYKPTAKIESRPSMPREGDKLRLQCDAYGNPVPDNYVWERENGEVPLLANIEGNSLVFFNLNKTDSGTYTCKASNTLGTFITHYKLDVNDPSPIPSTSSIDHAVIGGVVAVIAFLLFCLLIVLGRYLIRHKGTYLTHEAKGSDDAPDADTAIINAEGGQGGSDDKKEYFI.

The signal sequence occupies residues 1 to 17 (MHHPVILLLCLSSLAGA). The Extracellular segment spans residues 18-326 (ANLPPEDLSQ…PIPSTSSIDH (309 aa)). The Ig-like V-type domain occupies 22–120 (PEDLSQPVTA…PVRTAKAVVT (99 aa)). 2 disulfide bridges follow: Cys-45-Cys-105 and Cys-147-Cys-204. Ig-like C2-type domains follow at residues 128–223 (PQVS…HKIQ) and 228–306 (PTAK…TFIT). The segment at 217-240 (SSSHKIQVQYKPTAKIESRPSMPR) is disordered. Over residues 230–240 (AKIESRPSMPR) the composition is skewed to basic and acidic residues. An intrachain disulfide couples Cys-249 to Cys-295. A helical membrane pass occupies residues 327 to 347 (AVIGGVVAVIAFLLFCLLIVL). The Cytoplasmic portion of the chain corresponds to 348 to 394 (GRYLIRHKGTYLTHEAKGSDDAPDADTAIINAEGGQGGSDDKKEYFI). Residues 363–394 (AKGSDDAPDADTAIINAEGGQGGSDDKKEYFI) are disordered.

The protein belongs to the nectin family.

It localises to the cell membrane. The protein resides in the cell junction. In terms of biological role, may be involved in cell-cell adhesion. The chain is Cell adhesion molecule 3 (cadm3) from Xenopus laevis (African clawed frog).